The sequence spans 470 residues: Argininosuccinate lyase (470 aa).

This sequence belongs to the lyase 1 family. Argininosuccinate lyase subfamily.

The protein localises to the cytoplasm. It catalyses the reaction 2-(N(omega)-L-arginino)succinate = fumarate + L-arginine. The protein operates within amino-acid biosynthesis; L-arginine biosynthesis; L-arginine from L-ornithine and carbamoyl phosphate: step 3/3. The chain is Argininosuccinate lyase from Mycolicibacterium vanbaalenii (strain DSM 7251 / JCM 13017 / BCRC 16820 / KCTC 9966 / NRRL B-24157 / PYR-1) (Mycobacterium vanbaalenii).